The following is a 348-amino-acid chain: Fe-S cluster assembly protein DRE2 (348 aa).

The tract at residues Met-1–Val-185 is N-terminal SAM-like domain. Disordered stretches follow at residues Gln-128–Leu-148 and Lys-162–Lys-213. The linker stretch occupies residues Val-186–Ser-241. A compositionally biased stretch (acidic residues) spans Glu-188–Ser-206. [2Fe-2S] cluster-binding residues include Cys-248, Cys-259, Cys-262, and Cys-264. The segment at Cys-248–Cys-264 is fe-S binding site A. Residues Cys-311, Cys-314, Cys-322, and Cys-325 each coordinate [4Fe-4S] cluster. Short sequence motifs (cx2C motif) lie at residues Cys-311–Cys-314 and Cys-322–Cys-325. The fe-S binding site B stretch occupies residues Cys-311 to Cys-325.

This sequence belongs to the anamorsin family. As to quaternary structure, monomer. Interacts with TAH18. Interacts with MIA40. [2Fe-2S] cluster serves as cofactor. The cofactor is [4Fe-4S] cluster.

It is found in the cytoplasm. It localises to the mitochondrion intermembrane space. Its function is as follows. Component of the cytosolic iron-sulfur (Fe-S) protein assembly (CIA) machinery required for the maturation of extramitochondrial Fe-S proteins. Part of an electron transfer chain functioning in an early step of cytosolic Fe-S biogenesis, facilitating the de novo assembly of a [4Fe-4S] cluster on the scaffold complex CFD1-NBP35. Electrons are transferred to DRE2 from NADPH via the FAD- and FMN-containing protein TAH18. TAH18-DRE2 are also required for the assembly of the diferric tyrosyl radical cofactor of ribonucleotide reductase (RNR), probably by providing electrons for reduction during radical cofactor maturation in the catalytic small subunit RNR2. The chain is Fe-S cluster assembly protein DRE2 from Lachancea thermotolerans (strain ATCC 56472 / CBS 6340 / NRRL Y-8284) (Yeast).